The following is a 611-amino-acid chain: Pleckstrin homology domain-containing family N member 1 (611 aa).

Positions 1-45 are disordered; that stretch reads MGNSHCVPQAPRRLRASFSRKPSLKGNREDSARMSAGLPGPEAAR. G2 carries the N-myristoyl glycine lipid modification. Positions 61–100 are interaction with C1QBP; the sequence is TDILDLENQRENLEQPFLSVFKKGRRRVPVRNLGKVVHYA. PH domains are found at residues 96–192 and 222–319; these read VVHY…TALL and AVCA…THRE. At Y302 the chain carries Phosphotyrosine. 3 disordered regions span residues 323–424, 438–468, and 483–611; these read PLPG…PVTP, ESSPDAPDHTSETSHSPLYADPYTPPATSHR, and MQSA…VQWI. The segment covering 341–350 has biased composition (low complexity); that stretch reads GSLSSGGQTS. Residues 360 to 391 show a composition bias toward polar residues; the sequence is STRTSHSLPESSVPSTVGCSSQHTPDQANSDR. Position 456 is a phosphotyrosine (Y456). A compositionally biased stretch (low complexity) spans 498–509; it reads VPVSVPASDPRS. A Phosphoserine modification is found at S559. Residues 570 to 585 are compositionally biased toward basic and acidic residues; the sequence is RSPRRSRDPGYDHLWD.

As to quaternary structure, found in a complex with cytochrome c mRNA and various ribosomal proteins. Interacts with C1QBP. Interacts with ELAVL1. Interacts with BID. Phosphorylation is essential for its mitochondrial localization and regulates its interaction with C1QBP. In terms of tissue distribution, ubiquitous. Epressed in several cancer cell lines of differing origin.

The protein localises to the cell membrane. The protein resides in the mitochondrion. Its subcellular location is the mitochondrion membrane. Functionally, controls the stability of the leptin mRNA harboring an AU-rich element (ARE) in its 3' UTR, in cooperation with the RNA stabilizer ELAVL1. Decreases the stability of the leptin mRNA by antagonizing the function of ELAVL1 by inducing its atypical recruitment from the nucleus to the cytosol. Binds to cardiolipin (CL), phosphatidic acid (PA), phosphatidylinositol 4-phosphate (PtdIns(4)P) and phosphatidylserine (PS). Promotes apoptosis by enhancing BAX-BAK hetero-oligomerization via interaction with BID in colon cancer cells. The chain is Pleckstrin homology domain-containing family N member 1 (PLEKHN1) from Homo sapiens (Human).